We begin with the raw amino-acid sequence, 664 residues long: 26S rRNA (cytosine-C(5))-methyltransferase nsun-1 (664 aa).

Residues 1-105 (MAIVKKKKVS…DDSDAGDHLP (105 aa)) are disordered. The segment covering 38–52 (PKKKKLVKKVKKSAK) has biased composition (basic residues). Residues 53 to 68 (KAHEEEPIEQVEKLQL) show a composition bias toward basic and acidic residues. The segment covering 84-99 (SDDEDLRDDYSDDDSD) has biased composition (acidic residues). Residues 313-319 (CSAPGGK), D337, and D382 each bind S-adenosyl-L-methionine. The active-site Nucleophile is the C439. Positions 513-664 (KMSKQGVMEK…RRKKMLAKQQ (152 aa)) are disordered. The span at 519–528 (VMEKEKEKAA) shows a compositional bias: basic and acidic residues. Positions 541–550 (EASESSDDEE) are enriched in acidic residues. Residues 563–572 (KPAKKQQQKK) are compositionally biased toward basic residues. Residues 606 to 618 (KAAEKQAAVKEDD) show a composition bias toward basic and acidic residues. Basic residues-rich tracts occupy residues 627-644 (KRAKKPTQFKSKVPKRAA) and 652-664 (VKNRRKKMLAKQQ).

It belongs to the class I-like SAM-binding methyltransferase superfamily. RsmB/NOP family.

The protein localises to the nucleus. It is found in the nucleolus. It carries out the reaction a cytidine in 26S rRNA + S-adenosyl-L-methionine = a 5-methylcytidine in 26S rRNA + S-adenosyl-L-homocysteine + H(+). In terms of biological role, methyltransferase which methylates the carbon-5 position of cytosine 2982 to 5-methylcytosine (m5C2982) in 26S rRNA. May play a role in the translation of leucine and proline codons. May be required for the translation of specific mRNAs such as mRNAs involved in gonad development, collagen production and cuticle integrity. Plays a role in ensuring the correct localization of the germline-specific protein gld-1 during development. Not required for pre-rRNA processing, the production of mature 5S, 5.8S, 18S or 26S rRNAs or global translation. Plays a role in positively regulating fertility. The polypeptide is 26S rRNA (cytosine-C(5))-methyltransferase nsun-1 (Caenorhabditis elegans).